Consider the following 145-residue polypeptide: MSEQVETRLTPRERLTRGLAYSAVGPVDVTRGLLELGVGLGLQSARSTAAGLRRRYREGRLAREVAAAQETLAQELTAAQDVVANLPQALQDARTQRRSKHHLWIFAGIAAAILAGGAVAFSIVRRSSRPEPSPRPPSVEVQPRP.

Residues 104–124 (WIFAGIAAAILAGGAVAFSIV) form a helical membrane-spanning segment.

The protein belongs to the CwsA family.

It is found in the cell membrane. Its function is as follows. Required for regulated cell division, cell wall synthesis and the maintenance of cell shape. This chain is Cell wall synthesis protein CwsA, found in Mycobacterium bovis (strain ATCC BAA-935 / AF2122/97).